A 651-amino-acid polypeptide reads, in one-letter code: Mitogen-activated protein kinase kinase kinase 3 (651 aa).

Residues 68-330 (WRKGELIGCG…ATELLQHPFV (263 aa)) form the Protein kinase domain. ATP contacts are provided by residues 74–82 (IGCGAFGRV) and Lys-97. Positions 105 to 130 (SASKEKTQGHIRELEEEVQLLKNLSH) form a coiled coil. Glycyl lysine isopeptide (Lys-Gly) (interchain with G-Cter in ubiquitin) cross-links involve residues Lys-108 and Lys-110. Asp-196 acts as the Proton acceptor in catalysis. The interval 573–608 (MPSPLKSSKRTLNTSRVMQSGTEPTQVNESTKKGVN) is disordered. Polar residues predominate over residues 582–608 (RTLNTSRVMQSGTEPTQVNESTKKGVN). Positions 618-641 (RKWEEELYEELERHRENLRHAGAG) form a coiled coil.

This sequence belongs to the protein kinase superfamily. STE Ser/Thr protein kinase family. MAP kinase kinase kinase subfamily. In terms of assembly, interacts with NACK2 and MKK6. Expressed in roots and flowers.

The protein resides in the cytoplasm. The protein localises to the cytoskeleton. The enzyme catalyses L-seryl-[protein] + ATP = O-phospho-L-seryl-[protein] + ADP + H(+). It carries out the reaction L-threonyl-[protein] + ATP = O-phospho-L-threonyl-[protein] + ADP + H(+). Functionally, involved in cortical microtubules organization and stabilization by regulating the phosphorylation state of microtubule-associated proteins such as MAP65-1. The sequence is that of Mitogen-activated protein kinase kinase kinase 3 (ANP3) from Arabidopsis thaliana (Mouse-ear cress).